The primary structure comprises 159 residues: Putative viral CXC chemokine 2 (159 aa).

2 cysteine pairs are disulfide-bonded: cysteine 50–cysteine 77 and cysteine 52–cysteine 93.

It belongs to the intercrine alpha (chemokine CxC) family.

The sequence is that of Putative viral CXC chemokine 2 (UL147) from Human cytomegalovirus (strain Merlin) (HHV-5).